The sequence spans 242 residues: Peptidase E (242 aa).

Catalysis depends on charge relay system residues S123, D138, and H160.

Belongs to the peptidase S51 family.

Its subcellular location is the cytoplasm. The catalysed reaction is Dipeptidase E catalyzes the hydrolysis of dipeptides Asp-|-Xaa. It does not act on peptides with N-terminal Glu, Asn or Gln, nor does it cleave isoaspartyl peptides.. Its function is as follows. Hydrolyzes dipeptides containing N-terminal aspartate residues. May play a role in allowing the cell to use peptide aspartate to spare carbon otherwise required for the synthesis of the aspartate family of amino acids. In Nostoc sp. (strain PCC 7120 / SAG 25.82 / UTEX 2576), this protein is Peptidase E.